A 523-amino-acid chain; its full sequence is MAGSTSASLQTPYFPSSTQINPVRVDHTLPLPPAQPSLSFTQGLLVGQLSVVLLIGAFIKFFIFGEAPPPPSRGLSNRTSTHPRSYSINAASTDSSPRLLREKPSTSNILRPVPSSSTNTRSILRKTYYSATPTHPTPKHGRPRLYHSSHQPESLDWFNVLIAQTIAQYRQTAYILKDSPTSSILASLSETLNNPEKKPSFIDIIKVTDISLGEEFPIFSNCRVIAVEDPNSDGGRLQALMDVDLSDDNLSLAIETSLLLNYPKPFSAILPVALAVSVVRFSGTLCISFVPGPRTSDQTMSPIPTPHDTTSEAIDDQSSDQSSPAQNPDGPKDAHANTSNTTDASSKHGIPKTSLAFSFLPDYRLDLSVRSLIGSRSRLQDVPKVAQLVEARVQSWFEERVVEPRVQVVGLPNIWPRMGRTGLRSSQEEPEAGSGSVEIPVMTSPGTDGVSGGGGSGGGSGGGGGSMRGIDRGLSGREVGYEALRFRHAACGGHQNQSGRDGGRGGNEQFAMPGSMPDTVTET.

Over 1–43 (MAGSTSASLQTPYFPSSTQINPVRVDHTLPLPPAQPSLSFTQG) the chain is Lumenal. A helical transmembrane segment spans residues 44–64 (LLVGQLSVVLLIGAFIKFFIF). Residues 65–523 (GEAPPPPSRG…GSMPDTVTET (459 aa)) are Cytoplasmic-facing. Disordered regions lie at residues 70 to 118 (PPSR…SSST), 295 to 349 (TSDQ…SKHG), 420 to 473 (RTGL…IDRG), and 492 to 523 (GGHQNQSGRDGGRGGNEQFAMPGSMPDTVTET). Polar residues-rich tracts occupy residues 74 to 96 (GLSNRTSTHPRSYSINAASTDSS), 105 to 118 (STSNILRPVPSSST), and 295 to 312 (TSDQTMSPIPTPHDTTSE). One can recognise an SMP-LTD domain in the interval 151 to 412 (QPESLDWFNV…EPRVQVVGLP (262 aa)). The span at 449 to 467 (GVSGGGGSGGGSGGGGGSM) shows a compositional bias: gly residues.

Belongs to the MMM1 family. In terms of assembly, homodimer. Component of the ER-mitochondria encounter structure (ERMES) or MDM complex, composed of MMM1, MDM10, MDM12 and MDM34. An MMM1 homodimer associates with one molecule of MDM12 on each side in a pairwise head-to-tail manner, and the SMP-LTD domains of MMM1 and MDM12 generate a continuous hydrophobic tunnel for phospholipid trafficking.

The protein localises to the endoplasmic reticulum membrane. Component of the ERMES/MDM complex, which serves as a molecular tether to connect the endoplasmic reticulum (ER) and mitochondria. Components of this complex are involved in the control of mitochondrial shape and protein biogenesis, and function in nonvesicular lipid trafficking between the ER and mitochondria. The MDM12-MMM1 subcomplex functions in the major beta-barrel assembly pathway that is responsible for biogenesis of all outer membrane beta-barrel proteins, and acts in a late step after the SAM complex. The MDM10-MDM12-MMM1 subcomplex further acts in the TOM40-specific pathway after the action of the MDM12-MMM1 complex. Essential for establishing and maintaining the structure of mitochondria and maintenance of mtDNA nucleoids. This is Maintenance of mitochondrial morphology protein 1 from Paracoccidioides brasiliensis (strain Pb03).